We begin with the raw amino-acid sequence, 820 residues long: MSQTEHHISIEQEMRKSYLEYSLSVIIGRAIPDVRDGLKPVHRRILFAQQELGNSYTRPPKKCARIVGDVIGKYHPHGDSAVYDALVRMAQDFSMRDPLEEGQGNFGSIDGDAPAAMRYTEVRMSRLASEFLSDIDKETVDFRPNYDNSLEEPIVLPTKVPNLLLNGSSGIAVGMATNIPPHNLGELCNALLKIIDDPDVPIDNLLNIIHGPDFPTGGFIYVGQGLYDAYTKGRGTVKVRGKVEIEERKKGAQSIVIREIPFGLNKSSLVEKIAILVNERKIDGIADLRDESDRKGIRVVIELKKGVIPEIIINALYKFTPLETSFGINMLAVVDNRPQLLTIKSALTYFLDHRREVIVRRTRFELNKAEARLHILIGLIHALDHIDEVVNLIRSSSTPAEAKIRLIERFSLSEIQAQSILDMRLQRLTGLEREKLEEEMHELQTKIAWYESILGDTKILWGVIRDEVTGIKEMYTTPRRTEVIRETLTNIEIEDLIPDDDVVITLSRRGYIKRTNLAIYQQQRRGGKGVAGLHTSEDDFVQEFITTTNHQFLLLFTNKGRMHQLKVHQVPEGSRTAKGTHIANIVPLEKEEWVTTILTVREFSDNKFFLFATRKGMVKRSSASYYARSRRTGLLAVGLREDDELIMVKEVTNNDFIVLATAEGFAIRFSCEDVRNMGRGAAGVKGIALRPGDSVVACLILQEKQDTPAIMTVSNLGYGKRTSIDLYRVQTRGGKGIINFKVTQKTGLVIGAKPVSDDNALVLLTSTNKIIRMSVDEVRSAGRATMGVRLVKLDDGAYVVGFDTVDGTVDDSCDDATINT.

One can recognise a Topo IIA-type catalytic domain in the interval 31–496 (IPDVRDGLKP…TLTNIEIEDL (466 aa)). Catalysis depends on Y119, which acts as the O-(5'-phospho-DNA)-tyrosine intermediate. The short motif at 523–529 (QRRGGKG) is the GyrA-box element.

It belongs to the type II topoisomerase GyrA/ParC subunit family. Heterotetramer, composed of two GyrA and two GyrB chains. In the heterotetramer, GyrA contains the active site tyrosine that forms a transient covalent intermediate with DNA, while GyrB binds cofactors and catalyzes ATP hydrolysis.

The protein localises to the cytoplasm. It catalyses the reaction ATP-dependent breakage, passage and rejoining of double-stranded DNA.. In terms of biological role, a type II topoisomerase that negatively supercoils closed circular double-stranded (ds) DNA in an ATP-dependent manner to modulate DNA topology and maintain chromosomes in an underwound state. Negative supercoiling favors strand separation, and DNA replication, transcription, recombination and repair, all of which involve strand separation. Also able to catalyze the interconversion of other topological isomers of dsDNA rings, including catenanes and knotted rings. Type II topoisomerases break and join 2 DNA strands simultaneously in an ATP-dependent manner. This Lawsonia intracellularis (strain PHE/MN1-00) protein is DNA gyrase subunit A.